Reading from the N-terminus, the 38-residue chain is Photosystem II reaction center protein L (38 aa).

Residues Ser17–Phe37 traverse the membrane as a helical segment.

Belongs to the PsbL family. In terms of assembly, PSII is composed of 1 copy each of membrane proteins PsbA, PsbB, PsbC, PsbD, PsbE, PsbF, PsbH, PsbI, PsbJ, PsbK, PsbL, PsbM, PsbT, PsbX, PsbY, PsbZ, Psb30/Ycf12, at least 3 peripheral proteins of the oxygen-evolving complex and a large number of cofactors. It forms dimeric complexes.

The protein resides in the plastid membrane. Its function is as follows. One of the components of the core complex of photosystem II (PSII). PSII is a light-driven water:plastoquinone oxidoreductase that uses light energy to abstract electrons from H(2)O, generating O(2) and a proton gradient subsequently used for ATP formation. It consists of a core antenna complex that captures photons, and an electron transfer chain that converts photonic excitation into a charge separation. This subunit is found at the monomer-monomer interface and is required for correct PSII assembly and/or dimerization. This chain is Photosystem II reaction center protein L, found in Aneura mirabilis (Parasitic liverwort).